The chain runs to 302 residues: Sodium/potassium-transporting ATPase subunit beta-233 (302 aa).

The Cytoplasmic portion of the chain corresponds to methionine 1–serine 30. A helical; Signal-anchor for type II membrane protein transmembrane segment spans residues tryptophan 31–glycine 51. The Extracellular segment spans residues threonine 52–serine 302. Disulfide bonds link cysteine 125–cysteine 148 and cysteine 158–cysteine 174. N-linked (GlcNAc...) asparagine glycans are attached at residues asparagine 193 and asparagine 263. A disulfide bridge links cysteine 213 with cysteine 274.

The protein belongs to the X(+)/potassium ATPases subunit beta family. The sodium/potassium-transporting ATPase is composed of a catalytic alpha subunit, an auxiliary non-catalytic beta subunit and an additional regulatory subunit. Post-translationally, glycosylated. In terms of tissue distribution, expressed mainly in epithelial tissues.

The protein localises to the cell membrane. In terms of biological role, this is the non-catalytic component of the active enzyme, which catalyzes the hydrolysis of ATP coupled with the exchange of Na(+) and K(+) ions across the plasma membrane. The beta subunit regulates, through assembly of alpha/beta heterodimers, the number of sodium pumps transported to the plasma membrane. The polypeptide is Sodium/potassium-transporting ATPase subunit beta-233 (Anguilla anguilla (European freshwater eel)).